A 122-amino-acid chain; its full sequence is Large ribosomal subunit protein uL14c (122 aa).

Belongs to the universal ribosomal protein uL14 family. Part of the 50S ribosomal subunit.

The protein resides in the plastid. The protein localises to the chloroplast. Binds to 23S rRNA. The sequence is that of Large ribosomal subunit protein uL14c from Piper cenocladum (Ant piper).